Here is a 194-residue protein sequence, read N- to C-terminus: ATP-dependent Clp protease proteolytic subunit (194 aa).

Serine 98 functions as the Nucleophile in the catalytic mechanism. The active site involves histidine 123.

The protein belongs to the peptidase S14 family. Fourteen ClpP subunits assemble into 2 heptameric rings which stack back to back to give a disk-like structure with a central cavity, resembling the structure of eukaryotic proteasomes.

The protein resides in the cytoplasm. The catalysed reaction is Hydrolysis of proteins to small peptides in the presence of ATP and magnesium. alpha-casein is the usual test substrate. In the absence of ATP, only oligopeptides shorter than five residues are hydrolyzed (such as succinyl-Leu-Tyr-|-NHMec, and Leu-Tyr-Leu-|-Tyr-Trp, in which cleavage of the -Tyr-|-Leu- and -Tyr-|-Trp bonds also occurs).. Its function is as follows. Cleaves peptides in various proteins in a process that requires ATP hydrolysis. Has a chymotrypsin-like activity. Plays a major role in the degradation of misfolded proteins. In Clostridium kluyveri (strain NBRC 12016), this protein is ATP-dependent Clp protease proteolytic subunit.